Consider the following 459-residue polypeptide: Magnesium transporter MRS2-11, chloroplastic (459 aa).

The N-terminal 62 residues, 1-62 (MALTPIPSTF…EALKVLSRSK (62 aa)), are a transit peptide targeting the chloroplast. The disordered stretch occupies residues 76 to 122 (GDYESLNVSDDDDGSDSNSSDGDNGGGRDDSKKIDSSSSSSSSDSTS). Over residues 101 to 110 (GGRDDSKKID) the composition is skewed to basic and acidic residues. The segment covering 111-122 (SSSSSSSSDSTS) has biased composition (low complexity). The next 2 helical transmembrane spans lie at 397 to 417 (LLLQ…GIFG) and 430 to 450 (AFWL…FLMY). The short motif at 417–419 (GMN) is the Required for magnesium transport activity element.

It belongs to the CorA metal ion transporter (MIT) (TC 1.A.35.5) family. Expressed in the green part of the plant. Preferentially expressed in the spongy mesophyll cells and stomata of young leaves but also detected in cotyledons and at the base of the leaf petioles.

Its subcellular location is the plastid. The protein resides in the chloroplast membrane. High-affinity magnesium transporter that mediates the influx of magnesium in chloroplast. The protein is Magnesium transporter MRS2-11, chloroplastic (MRS2-11) of Arabidopsis thaliana (Mouse-ear cress).